A 235-amino-acid polypeptide reads, in one-letter code: Transmembrane protein 215 (235 aa).

A run of 2 helical transmembrane segments spans residues 12 to 32 (LVVALVSVFLVFGFMFTVSGM) and 40 to 60 (IPLLAIGPAICLPGIAAIALA). A disordered region spans residues 99–146 (SDLESGKGSSDELAKKAGLRGKQLPQGPGEVPMASSVTTPTPTEEGEC).

It is found in the membrane. The protein is Transmembrane protein 215 (Tmem215) of Mus musculus (Mouse).